Here is a 65-residue protein sequence, read N- to C-terminus: U11-theraphotoxin-Cg1b (65 aa).

Residues 1-21 form the signal peptide; sequence MKTTILVVILGLTLLFALSAA. Residues 22 to 29 constitute a propeptide that is removed on maturation; it reads TELKDEER. 3 disulfides stabilise this stretch: cysteine 31-cysteine 45, cysteine 38-cysteine 50, and cysteine 44-cysteine 57.

The protein belongs to the neurotoxin 10 (Hwtx-1) family. 32 (Jztx-16) subfamily. In terms of tissue distribution, expressed by the venom gland.

The protein resides in the secreted. Its function is as follows. Probable ion channel inhibitor. The chain is U11-theraphotoxin-Cg1b from Chilobrachys guangxiensis (Chinese earth tiger tarantula).